The primary structure comprises 627 residues: Phosphomethylpyrimidine synthase (627 aa).

Over residues 1-24 (MSATQKNNITRLEQLDRQSTQPFP) the composition is skewed to polar residues. Residues 1-29 (MSATQKNNITRLEQLDRQSTQPFPNSRKV) are disordered. Substrate-binding positions include Asn231, Met260, Tyr289, His325, 345 to 347 (SRG), 386 to 389 (DGLR), and Glu425. Position 429 (His429) interacts with Zn(2+). Residue Tyr452 participates in substrate binding. His493 contacts Zn(2+). Cys573, Cys576, and Cys581 together coordinate [4Fe-4S] cluster.

The protein belongs to the ThiC family. As to quaternary structure, homodimer. [4Fe-4S] cluster serves as cofactor.

It carries out the reaction 5-amino-1-(5-phospho-beta-D-ribosyl)imidazole + S-adenosyl-L-methionine = 4-amino-2-methyl-5-(phosphooxymethyl)pyrimidine + CO + 5'-deoxyadenosine + formate + L-methionine + 3 H(+). Its pathway is cofactor biosynthesis; thiamine diphosphate biosynthesis. Its function is as follows. Catalyzes the synthesis of the hydroxymethylpyrimidine phosphate (HMP-P) moiety of thiamine from aminoimidazole ribotide (AIR) in a radical S-adenosyl-L-methionine (SAM)-dependent reaction. This is Phosphomethylpyrimidine synthase from Pseudomonas paraeruginosa (strain DSM 24068 / PA7) (Pseudomonas aeruginosa (strain PA7)).